The primary structure comprises 207 residues: 23 kDa calcium-binding protein (207 aa).

Met-1 carries the blocked amino end (Met) modification. 4 consecutive EF-hand domains span residues 17–52 (AKLD…TFEN), 60–95 (VTAD…CLKK), 119–154 (MKLD…TYKQ), and 161–196 (PTEA…GLKK). 19 residues coordinate Ca(2+): Asp-30, Asn-32, Asn-34, Thr-36, Glu-41, Asp-73, Asp-75, Asn-77, Glu-84, Asp-132, Asp-134, Ser-136, Gln-138, Glu-143, Asp-174, Asp-176, Asn-178, Thr-180, and Glu-185.

Its function is as follows. Expected to play a crucial role in calcium-dependent regulation of ciliary movement. This is 23 kDa calcium-binding protein from Tetrahymena thermophila.